The chain runs to 464 residues: ATP synthase subunit beta 2 (464 aa).

Residue 147–154 (GGAGVGKT) participates in ATP binding.

This sequence belongs to the ATPase alpha/beta chains family. F-type ATPases have 2 components, CF(1) - the catalytic core - and CF(0) - the membrane proton channel. CF(1) has five subunits: alpha(3), beta(3), gamma(1), delta(1), epsilon(1). CF(0) has four main subunits: a(1), b(1), b'(1) and c(9-12).

It localises to the cell inner membrane. The catalysed reaction is ATP + H2O + 4 H(+)(in) = ADP + phosphate + 5 H(+)(out). In terms of biological role, produces ATP from ADP in the presence of a proton gradient across the membrane. The catalytic sites are hosted primarily by the beta subunits. The protein is ATP synthase subunit beta 2 of Cereibacter sphaeroides (strain ATCC 17029 / ATH 2.4.9) (Rhodobacter sphaeroides).